The following is a 315-amino-acid chain: MLRRALEEKYALKIGEIRTTTAVICSISTDTILDFEKQCLKPHCTFSKPIINLGYTYYDIPSEYKEELNESIAVNHRIDAYALITTFDETPIESIEPLISNDKSEIKWTFLLDWTELHQGTWLRFLSKQFESLESKGYDLKNENISVWCMNSDYMFELQKNDILWESFHFEYLQQSLRSVLFYRNGSLIYVDKKRNQLPLFEIFVKLCLHNRNDKYKSLNQFTEMSETSQVFIPFNSDSEDLIKTIDEEFQPEEVLKPDFMPTFEKVIPYSKPKDEPHLPPIGELPHFDMNKELEEAAIILKQASKKEAYAKQNI.

Belongs to the dynein light intermediate chain DYN3 family. In terms of assembly, the cytoplasmic dynein is composed of at least two heavy chains and a number of intermediate and light chains.

It localises to the cytoplasm. The protein localises to the cytoskeleton. Its function is as follows. Component of the cytoplasmic dynein which acts as a motor for the intracellular retrograde motility of vesicles and organelles along microtubules. May play an important role in the proper orientation of the mitotic spindle into the budding daughter cell yeast. Probably required for normal progression of the cell cycle. The chain is Cytoplasmic dynein intermediate light chain DYN3 (DYN3) from Candida glabrata (strain ATCC 2001 / BCRC 20586 / JCM 3761 / NBRC 0622 / NRRL Y-65 / CBS 138) (Yeast).